We begin with the raw amino-acid sequence, 897 residues long: MDSLSAYPPQSTFQQLQNDEELARRLQDEWNSSSPSSAPSSSSSQNQVELDEQFARSLQNSQSSSYSLPPFDHPPSKNPTSSSLSTRKRWRQKRLWSFKNFPFRPPTRLTSTPSNSSSLPSIPSSSSTPSISSIPHTTSSVSNDIPSVLGSSDHPIDLDNPEHLTPPSSFITAKQLSRLPTPLPPPSSSSLPTGTISTNSFCPYERKVQPEHVTKELHQLLQHNTPSPFDTIDLQLKNEQVQSAGLLVSLLPHQVEGHAWMESMEQSSKCGGVMADDMGLGKTIQTIALLLTQKSQDPLRKTNLIVVSVALLHQWAEELSTKVHPSKKLSVYIHHGSTKKNLDSYELSQYDVVLTTYSMLAYEMKQNDAFNNNNPATATPPPACSLLETSWYRIVLDEAHTIRNRDTLAAKCCVKLDAKYRWCLSGTPIQNHIDEFYSLLKFLRIKPYCVWSLFAKDISRPLKSYRADIVEAALKRLRILLASTVFRRTKETRVNNLPIVNLPPKTIRTVSVNLLPEERALYNEQMSSAQSLVDNYFNNDHDLSRYGFLLVSLLRLRQFCCHPWLVKSSSLDNSFRIRDSENVRNACKSLDPLTIERIATLQDFNCSVCLDPCLAPVFIIPCGHFTCQECMSMLVGQKYGSSSTSTIIAKCPMCRGNIVQDSLVDATILQAIHGPLNSLKQLELDMNQSFSEQESIKLRWENRIDQMFTKKFGKRASEWKSSSKLNQARQTILDIIGSKRNEKILVYSQFSQYLCLVSHMLKLENIRHVRYDGTMSANQRQKSLHSFNNDKDVLVMLVSLKAGSVGLNLTIANHVILQEPFYNPSIEDQAIDRVHRLGQQKPVTVYRFITKDTIEERIVSVQRKKRQLVKEALDSNENNPLSRLDKEELLYLFGLNS.

2 disordered regions span residues 25–89 (RLQD…TRKR) and 106–168 (PTRL…TPPS). 3 stretches are compositionally biased toward low complexity: residues 32-44 (SSSPSSAPSSSSS), 57-68 (SLQNSQSSSYSL), and 106-142 (PTRLTSTPSNSSSLPSIPSSSSTPSISSIPHTTSSVS). In terms of domain architecture, Helicase ATP-binding spans 263–446 (SMEQSSKCGG…YSLLKFLRIK (184 aa)). 276 to 283 (DDMGLGKT) provides a ligand contact to ATP. The DEAH box motif lies at 397 to 400 (DEAH). The RING-type zinc-finger motif lies at 606 to 655 (CSVCLDPCLAPVFIIPCGHFTCQECMSMLVGQKYGSSSTSTIIAKCPMCR). A Helicase C-terminal domain is found at 727-890 (QARQTILDII…LSRLDKEELL (164 aa)).

Belongs to the SNF2/RAD54 helicase family.

The protein localises to the cytoplasm. It is found in the nucleus. This is an uncharacterized protein from Schizosaccharomyces pombe (strain 972 / ATCC 24843) (Fission yeast).